We begin with the raw amino-acid sequence, 169 residues long: Cell division protein B3 (169 aa).

Part of a cell division machinery. May fulfill a coordination function between the Cdv proteins during cell division. The sequence is that of Cell division protein B3 from Sulfolobus acidocaldarius (strain ATCC 33909 / DSM 639 / JCM 8929 / NBRC 15157 / NCIMB 11770).